A 303-amino-acid polypeptide reads, in one-letter code: Quinolinate synthase (303 aa).

2 residues coordinate iminosuccinate: His25 and Ser42. Cys87 contacts [4Fe-4S] cluster. Residues 113–115 (YVN) and Ser130 contribute to the iminosuccinate site. Position 173 (Cys173) interacts with [4Fe-4S] cluster. Residues 199-201 (HPE) and Thr216 contribute to the iminosuccinate site. [4Fe-4S] cluster is bound at residue Cys261.

It belongs to the quinolinate synthase family. Type 2 subfamily. [4Fe-4S] cluster serves as cofactor.

It is found in the cytoplasm. It carries out the reaction iminosuccinate + dihydroxyacetone phosphate = quinolinate + phosphate + 2 H2O + H(+). The protein operates within cofactor biosynthesis; NAD(+) biosynthesis; quinolinate from iminoaspartate: step 1/1. Catalyzes the condensation of iminoaspartate with dihydroxyacetone phosphate to form quinolinate. This chain is Quinolinate synthase, found in Desulforudis audaxviator (strain MP104C).